We begin with the raw amino-acid sequence, 89 residues long: NADH-ubiquinone oxidoreductase chain 4L (89 aa).

Helical transmembrane passes span 1–21 (MSLTLVLFLIGILGFVFNRKN), 22–42 (IILMLISIEIMLLSITFLILV), and 57–77 (IYIIVVAGAESAIGLAILVAF).

The protein belongs to the complex I subunit 4L family.

The protein localises to the mitochondrion membrane. The enzyme catalyses a ubiquinone + NADH + 5 H(+)(in) = a ubiquinol + NAD(+) + 4 H(+)(out). Functionally, core subunit of the mitochondrial membrane respiratory chain NADH dehydrogenase (Complex I) that is believed to belong to the minimal assembly required for catalysis. Complex I functions in the transfer of electrons from NADH to the respiratory chain. The immediate electron acceptor for the enzyme is believed to be ubiquinone. This is NADH-ubiquinone oxidoreductase chain 4L (ND4L) from Hypocrea jecorina (Trichoderma reesei).